The following is a 705-amino-acid chain: Elongation factor G (705 aa).

A tr-type G domain is found at 8 to 291 (EKVRNIGIMA…AVVEYLPSPI (284 aa)). GTP contacts are provided by residues 17–24 (AHIDAGKT), 90–94 (DTPGH), and 144–147 (NKMD).

This sequence belongs to the TRAFAC class translation factor GTPase superfamily. Classic translation factor GTPase family. EF-G/EF-2 subfamily.

The protein localises to the cytoplasm. Its function is as follows. Catalyzes the GTP-dependent ribosomal translocation step during translation elongation. During this step, the ribosome changes from the pre-translocational (PRE) to the post-translocational (POST) state as the newly formed A-site-bound peptidyl-tRNA and P-site-bound deacylated tRNA move to the P and E sites, respectively. Catalyzes the coordinated movement of the two tRNA molecules, the mRNA and conformational changes in the ribosome. This Chloroherpeton thalassium (strain ATCC 35110 / GB-78) protein is Elongation factor G.